Here is a 117-residue protein sequence, read N- to C-terminus: Probable non-functional immunoglobulinn kappa variable 1-37 (117 aa).

The N-terminal stretch at 1–22 (MDMRVPAQLLGLLLLWVPGARC) is a signal peptide. The region spanning 24–117 (IQLTQSPSSL…YYGQRTYNAP (94 aa)) is the Ig-like domain.

Most probably, the immunoglobulin is not assembled due to incorrect folding of light chain. Immunoglobulins are composed of two identical heavy chains and two identical light chains; disulfide-linked.

It is found in the secreted. Its subcellular location is the cell membrane. In terms of biological role, probable non-functional open reading frame (ORF) of V region of the variable domain of immunoglobulin light chains. Non-functional ORF generally cannot participate in the synthesis of a productive immunoglobulin chain due to altered V-(D)-J or switch recombination and/or splicing site (at mRNA level) and/or conserved amino acid change (protein level). Immunoglobulins, also known as antibodies, are membrane-bound or secreted glycoproteins produced by B lymphocytes. In the recognition phase of humoral immunity, the membrane-bound immunoglobulins serve as receptors which, upon binding of a specific antigen, trigger the clonal expansion and differentiation of B lymphocytes into immunoglobulins-secreting plasma cells. Secreted immunoglobulins mediate the effector phase of humoral immunity, which results in the elimination of bound antigens. The antigen binding site is formed by the variable domain of one heavy chain, together with that of its associated light chain. Thus, each immunoglobulin has two antigen binding sites with remarkable affinity for a particular antigen. The variable domains are assembled by a process called V-(D)-J rearrangement and can then be subjected to somatic hypermutations which, after exposure to antigen and selection, allow affinity maturation for a particular antigen. This is Probable non-functional immunoglobulinn kappa variable 1-37 from Homo sapiens (Human).